Reading from the N-terminus, the 453-residue chain is Glutamyl-tRNA(Gln) amidotransferase subunit A (453 aa).

Residues K56 and S131 each act as charge relay system in the active site. The Acyl-ester intermediate role is filled by S155.

The protein belongs to the amidase family. GatA subfamily. In terms of assembly, heterotrimer of A, B and C subunits.

It catalyses the reaction L-glutamyl-tRNA(Gln) + L-glutamine + ATP + H2O = L-glutaminyl-tRNA(Gln) + L-glutamate + ADP + phosphate + H(+). Its function is as follows. Allows the formation of correctly charged Gln-tRNA(Gln) through the transamidation of misacylated Glu-tRNA(Gln) in organisms which lack glutaminyl-tRNA synthetase. The reaction takes place in the presence of glutamine and ATP through an activated gamma-phospho-Glu-tRNA(Gln). The polypeptide is Glutamyl-tRNA(Gln) amidotransferase subunit A (Campylobacter jejuni (strain RM1221)).